Here is a 451-residue protein sequence, read N- to C-terminus: MSIQSGEILETVKMVADQNFDVRTITIGIDLHDCISTDIDVLNQNIYNKITTVGKDLVATAKYLSAKYGVPIVNQRISVTPIAQIAAASKADSYVSVAQTLDKAAKAIGVSFIGGFSALVQKGMSPSDEVLIRSIPEAMKTTDIVCSSINVGSTRAGINMDAVKLAGETIKRTAEITPEGFGCAKIVVFCNAVEDNPFMAGAFHGSGEADAVINVGVSGPGVVKAALENSDATTLTEVAEVVKKTAFKITRVGELIGREASKMLNIPFGILDLSLAPTPAVGDSVARILEEMGLSVCGTHGTTAALALLNDAVKKGGMMASSAVGGLSGAFIPVSEDEGMIAAAEAGVLTLDKLEAMTAVCSVGLDMIAVPGDTPAHTISGIIADEAAIGMINSKTTAVRIIPVTGKTVGDSVEFGGLLGYAPVMPVKEGSCEVFVNRGGRIPAPVQSMKN.

This sequence belongs to the UPF0210 family. In terms of assembly, homodimer.

The chain is UPF0210 protein NMC1568 from Neisseria meningitidis serogroup C / serotype 2a (strain ATCC 700532 / DSM 15464 / FAM18).